Consider the following 311-residue polypeptide: Deacetoxycephalosporin C synthase (311 aa).

Residues 154-267 (DCEPLLRFRY…RTSSVFFLRP (114 aa)) enclose the Fe2OG dioxygenase domain.

It belongs to the iron/ascorbate-dependent oxidoreductase family. It depends on Fe cation as a cofactor. L-ascorbate serves as cofactor.

It carries out the reaction penicillin N + 2-oxoglutarate + O2 = deacetoxycephalosporin C + succinate + CO2 + H2O. The protein operates within antibiotic biosynthesis; cephalosporin C biosynthesis. Functionally, catalyzes the step from penicillin N to deacetoxy-cephalosporin C. The protein is Deacetoxycephalosporin C synthase (cefE) of Streptomyces clavuligerus.